A 394-amino-acid chain; its full sequence is RNA-binding motif protein, X-linked-like-2 (394 aa).

The RRM domain maps to G8–K86. The segment covering R67–A78 has biased composition (basic and acidic residues). Positions R67 to Y394 are disordered. A compositionally biased stretch (pro residues) spans R150–R165. Composition is skewed to basic and acidic residues over residues P196–R231 and E239–F285. The segment covering Y321–G333 has biased composition (low complexity). Basic and acidic residues-rich tracts occupy residues R334–R350 and G383–Y394.

Its subcellular location is the nucleus. This chain is RNA-binding motif protein, X-linked-like-2 (RBMXL2), found in Macaca fascicularis (Crab-eating macaque).